A 236-amino-acid chain; its full sequence is MAATLLDVCAVVPAAGFGRRMQTECPKQYLSIGNKTILEHSVHALLAHPRVTRVVIAISPGDHRFAQLPLANHPQITVVDGGNERADSVLAGLQAVAKAQWVLVHDAARPCLHQDDLARLLAISENSRVGGILASPVRDTMKRGEPGKNAIAHTVERADLWHALTPQFFPRELLHDCLTRALNEGATITDEASALEYCGFHPALVEGRADNIKVTRPEDLALAEFYLTRTIHQEKA.

Belongs to the IspD/TarI cytidylyltransferase family. IspD subfamily. In terms of assembly, homodimer.

It carries out the reaction 2-C-methyl-D-erythritol 4-phosphate + CTP + H(+) = 4-CDP-2-C-methyl-D-erythritol + diphosphate. The protein operates within isoprenoid biosynthesis; isopentenyl diphosphate biosynthesis via DXP pathway; isopentenyl diphosphate from 1-deoxy-D-xylulose 5-phosphate: step 2/6. Catalyzes the formation of 4-diphosphocytidyl-2-C-methyl-D-erythritol from CTP and 2-C-methyl-D-erythritol 4-phosphate (MEP). In Salmonella schwarzengrund (strain CVM19633), this protein is 2-C-methyl-D-erythritol 4-phosphate cytidylyltransferase.